The following is a 359-amino-acid chain: Carbamoyl phosphate synthase small chain (359 aa).

Residues 1 to 169 (MTKRILVLED…TKTSYPAPGV (169 aa)) are CPSase. Residues serine 46, glycine 220, and glycine 222 each contribute to the L-glutamine site. The Glutamine amidotransferase type-1 domain maps to 172 to 358 (SVVLVDFGLK…IEMMEVFKQS (187 aa)). Catalysis depends on cysteine 247, which acts as the Nucleophile. Positions 248, 251, 289, 291, and 292 each coordinate L-glutamine. Active-site residues include histidine 331 and aspartate 333.

This sequence belongs to the CarA family. In terms of assembly, composed of two chains; the small (or glutamine) chain promotes the hydrolysis of glutamine to ammonia, which is used by the large (or ammonia) chain to synthesize carbamoyl phosphate. Tetramer of heterodimers (alpha,beta)4.

It carries out the reaction hydrogencarbonate + L-glutamine + 2 ATP + H2O = carbamoyl phosphate + L-glutamate + 2 ADP + phosphate + 2 H(+). The catalysed reaction is L-glutamine + H2O = L-glutamate + NH4(+). The protein operates within amino-acid biosynthesis; L-arginine biosynthesis; carbamoyl phosphate from bicarbonate: step 1/1. Its pathway is pyrimidine metabolism; UMP biosynthesis via de novo pathway; (S)-dihydroorotate from bicarbonate: step 1/3. Small subunit of the glutamine-dependent carbamoyl phosphate synthetase (CPSase). CPSase catalyzes the formation of carbamoyl phosphate from the ammonia moiety of glutamine, carbonate, and phosphate donated by ATP, constituting the first step of 2 biosynthetic pathways, one leading to arginine and/or urea and the other to pyrimidine nucleotides. The small subunit (glutamine amidotransferase) binds and cleaves glutamine to supply the large subunit with the substrate ammonia. The protein is Carbamoyl phosphate synthase small chain of Streptococcus pneumoniae (strain ATCC BAA-255 / R6).